The sequence spans 303 residues: Nod factor export ATP-binding protein I (303 aa).

The region spanning 5 to 235 is the ABC transporter domain; the sequence is LQMRNVRKLY…EIGCDVVEVY (231 aa). Residue 37–44 participates in ATP binding; it reads GPNGAGKT.

Belongs to the ABC transporter superfamily. Lipooligosaccharide exporter (TC 3.A.1.102) family. In terms of assembly, the complex is composed of two ATP-binding proteins (NodI) and two transmembrane proteins (NodJ).

The protein resides in the cell inner membrane. In terms of biological role, part of the ABC transporter complex NodIJ involved in the export of the nodulation factors (Nod factors), the bacterial signal molecules that induce symbiosis and subsequent nodulation induction. Nod factors are LCO (lipo-chitin oligosaccharide), a modified beta-1,4-linked N-acetylglucosamine oligosaccharide. This subunit is responsible for energy coupling to the transport system. The polypeptide is Nod factor export ATP-binding protein I (Cupriavidus metallidurans (strain ATCC 43123 / DSM 2839 / NBRC 102507 / CH34) (Ralstonia metallidurans)).